The following is a 235-amino-acid chain: Orotidine 5'-phosphate decarboxylase (235 aa).

Residues D12, K34, 61 to 70 (DMKLLDIDNT), T116, R177, Q186, and R207 each bind substrate. The Proton donor role is filled by K63.

The protein belongs to the OMP decarboxylase family. Type 1 subfamily. As to quaternary structure, homodimer.

The catalysed reaction is orotidine 5'-phosphate + H(+) = UMP + CO2. The protein operates within pyrimidine metabolism; UMP biosynthesis via de novo pathway; UMP from orotate: step 2/2. Functionally, catalyzes the decarboxylation of orotidine 5'-monophosphate (OMP) to uridine 5'-monophosphate (UMP). This chain is Orotidine 5'-phosphate decarboxylase, found in Rhizobium leguminosarum bv. trifolii (strain WSM2304).